The chain runs to 1250 residues: DNA-directed RNA polymerase subunit beta'' (1250 aa).

Positions 224, 314, 321, and 324 each coordinate Zn(2+).

The protein belongs to the RNA polymerase beta' chain family. RpoC2 subfamily. In plastids the minimal PEP RNA polymerase catalytic core is composed of four subunits: alpha, beta, beta', and beta''. When a (nuclear-encoded) sigma factor is associated with the core the holoenzyme is formed, which can initiate transcription. Zn(2+) serves as cofactor.

The protein localises to the plastid. It localises to the chloroplast. It carries out the reaction RNA(n) + a ribonucleoside 5'-triphosphate = RNA(n+1) + diphosphate. DNA-dependent RNA polymerase catalyzes the transcription of DNA into RNA using the four ribonucleoside triphosphates as substrates. The sequence is that of DNA-directed RNA polymerase subunit beta'' from Staurastrum punctulatum (Green alga).